The following is a 97-amino-acid chain: Small ribosomal subunit protein bS16c (97 aa).

The protein belongs to the bacterial ribosomal protein bS16 family.

Its subcellular location is the plastid. The protein resides in the chloroplast. The chain is Small ribosomal subunit protein bS16c from Piper cenocladum (Ant piper).